Reading from the N-terminus, the 368-residue chain is Probable endopolygalacturonase I (368 aa).

An N-terminal signal peptide occupies residues 1-18; that stretch reads MHSYQLLGLAAVGSLVSA. The propeptide occupies 19-31; sequence APAPSRVSEFAKK. An intrachain disulfide couples C35 to C50. PbH1 repeat units lie at residues 140-161, 162-192, and 193-214; these read VEDSTFKGINIKNTPVQAISVQ, ATNVHLNDFTIDNSDGDDNGGHNTDGFDISE, and STGVYISGATVKNQDDCIAINS. D207 (proton donor) is an active-site residue. A disulfide bond links C209 and C225. The active site involves H229. 3 PbH1 repeats span residues 244-265, 273-295, and 307-352; these read VKNVTISDSTVSNSANGVRIKT, VSEITYSNIQLSGITDYGIVIEQ, and STGI…DLSG. N246 carries N-linked (GlcNAc...) asparagine glycosylation. 2 disulfide bridges follow: C335-C340 and C359-C368.

This sequence belongs to the glycosyl hydrolase 28 family.

It is found in the secreted. The catalysed reaction is (1,4-alpha-D-galacturonosyl)n+m + H2O = (1,4-alpha-D-galacturonosyl)n + (1,4-alpha-D-galacturonosyl)m.. Its function is as follows. Involved in maceration and soft-rotting of plant tissue. Hydrolyzes the 1,4-alpha glycosidic bonds of de-esterified pectate in the smooth region of the plant cell wall. This is Probable endopolygalacturonase I (pgaI) from Aspergillus niger (strain ATCC MYA-4892 / CBS 513.88 / FGSC A1513).